The following is a 443-amino-acid chain: KH domain-containing, RNA-binding, signal transduction-associated protein 1 (443 aa).

The tract at residues 1 to 94 (MQRRDDPASR…PLLPPSATAA (94 aa)) is disordered. Residues Ser18 and Ser20 each carry the phosphoserine modification. Lys21 carries the post-translational modification N6-acetyllysine. Residue Ser29 is modified to Phosphoserine. The residue at position 33 (Thr33) is a Phosphothreonine. Residues Arg45 and Arg52 each carry the asymmetric dimethylarginine; by PRMT1 modification. Ser58 is modified (phosphoserine; by MAPK1). Pro residues predominate over residues 61-72 (TQPPPLLPPSTP). Phosphothreonine; by MAPK1 occurs at positions 71 and 84. Positions 81 to 94 (SAPTPLLPPSATAA) are enriched in low complexity. Residues Lys96 and Lys102 each participate in a glycyl lysine isopeptide (Lys-Gly) (interchain with G-Cter in SUMO2) cross-link. The interval 100–260 (ENKYLPELMA…VKKFLVPDMM (161 aa)) is involved in homodimerization. Ser113 is subject to Phosphoserine. Lys139 participates in a covalent cross-link: Glycyl lysine isopeptide (Lys-Gly) (interchain with G-Cter in SUMO2). Ser150 is modified (phosphoserine). The 27-residue stretch at 171–197 (NFVGKILGPQGNTIKRLQEETGAKISV) folds into the KH domain. An N6-acetyllysine; alternate modification is found at Lys175. A Glycyl lysine isopeptide (Lys-Gly) (interchain with G-Cter in SUMO2); alternate cross-link involves residue Lys175. At Thr183 the chain carries Phosphothreonine. Residues 280–317 (PSRGRGVSVRGRGAAPPPPPVPRGRGVGPPRGALVRGT) are disordered. Arg282, Arg284, and Arg291 each carry omega-N-methylarginine. Low complexity predominate over residues 283–293 (GRGVSVRGRGA). An Asymmetric dimethylarginine modification is found at Arg304. The segment covering 307-316 (GPPRGALVRG) has biased composition (low complexity). Omega-N-methylarginine; by PRMT1 is present on residues Arg310 and Arg315. Position 320 is a dimethylated arginine; alternate (Arg320). Arg320 is modified (omega-N-methylarginine; by PRMT1; alternate). Omega-N-methylarginine; by PRMT1 is present on Arg325. The tract at residues 326-345 (GATVTRGVPPPPTVRGAPTP) is disordered. Dimethylated arginine; alternate occurs at positions 331 and 340. Residues Arg331 and Arg340 each carry the omega-N-methylarginine; by PRMT1; alternate modification. The residue at position 331 (Arg331) is an Asymmetric dimethylarginine; alternate. Residues 351 to 443 (GIQRIPLPPT…AYREHPYGRY (93 aa)) form an interaction with HNRNPA1 region. At Tyr387 the chain carries Phosphotyrosine. Ser390 is subject to Phosphoserine. Residues 400–420 (GHGELQDSYEAYGQDDWNGTR) form an interaction with ZBTB7A region. Residues 411–443 (YGQDDWNGTRPSLKAPPARPVKGAYREHPYGRY) are disordered. A Glycyl lysine isopeptide (Lys-Gly) (interchain with G-Cter in SUMO2) cross-link involves residue Lys432. The segment covering 434-443 (AYREHPYGRY) has biased composition (basic and acidic residues). Tyr435, Tyr440, and Tyr443 each carry phosphotyrosine; by PTK6.

This sequence belongs to the KHDRBS family. Self-associates to form homooligomers when bound to RNA, oligomerization appears to be limited when binding to proteins. Forms a trimeric complex in the nucleus consisting of BANP, HDAC6 and KHDRBS1/SAM68; HDAC6 keeps KHDRBS1 in a deacetylated state which inhibits the inclusion of CD44 alternate exons. The complex is disrupted by MAPK1/MAPK3-mediated phosphorylation of BANP which results in BANP export to the cytoplasm. This facilitates acetylation of KHDRBS1 and CD44 variant exon inclusion. Interacts with KHDRBS3/SLIM-2 and KHDRBS2/SLIM-1; heterooligomer formation of KHDRBS family proteins may modulate RNA substrate specificity. Interacts with RASA1, FYN, GRB2, PLCG1, SRC, CBP and PRMT1. Interacts with PTK6 (via SH3 and SH2 domains). Forms a complex with ILF2, ILF3, YLPM1, RBMX, NCOA5 and PPP1CA. Binds WBP4/FBP21 (via WW domains), FNBP4/FBP30 (via WW domains). Interacts (via Arg/Gly-rich-flanked Pro-rich regions) with FYN (via the SH3 domain). Interacts with APC, HNRNPA1. Interacts with the non-receptor tyrosine kinase SRMS; the interaction leads to phosphorylation of KHDRBS1. Interacts with ZBTB7A; negatively regulates KHDRBS1 splicing activity toward BCL2L1. Post-translationally, tyrosine phosphorylated by several non-receptor tyrosine kinases including LCK, FYN and JAK3. Also tyrosine phosphorylated by the non-receptor tyrosine kinase SRMS in an EGF-dependent manner. Phosphorylation by PTK6 negatively regulates its RNA binding ability. Phosphorylation by PTK6 at Tyr-440 dictates the nuclear localization of KHDRBS1. Phosphorylation by MAPK1 at Ser-58, Thr-71 and Thr-84 regulates CD44 alternative splicing by promoting CD44 exon v5 inclusion. In terms of processing, acetylated. Positively correlates with ability to bind RNA. Deacetylated by HDAC6; this regulates alternative splicing by inhibiting the inclusion of CD44 alternate exons. Arginine methylation is required for nuclear localization. Inhibits interaction with Src-like SH3 domains, but not interaction with WW domains of WBP4/FBP21 and FNBP4/FBP30. In adult cerebellum expressed in most neuronal cell populations, specifically in cerebellar granule cells of the internal granular layer, ROR(alpha)-positive Purkinje cells, internal granular layer and molecular layer interneurons (at protein level).

The protein localises to the nucleus. Its subcellular location is the cytoplasm. It is found in the membrane. In terms of biological role, recruited and tyrosine phosphorylated by several receptor systems, for example the T-cell, leptin and insulin receptors. Once phosphorylated, functions as an adapter protein in signal transduction cascades by binding to SH2 and SH3 domain-containing proteins. Role in G2-M progression in the cell cycle. Represses CBP-dependent transcriptional activation apparently by competing with other nuclear factors for binding to CBP. Also acts as a putative regulator of mRNA stability and/or translation rates and mediates mRNA nuclear export. Positively regulates the association of constitutive transport element (CTE)-containing mRNA with large polyribosomes and translation initiation. May not be involved in the nucleocytoplasmic export of unspliced (CTE)-containing RNA species. RNA-binding protein that plays a role in the regulation of alternative splicing and influences mRNA splice site selection and exon inclusion. Binds to RNA containing 5'-[AU]UAA-3' as a bipartite motif spaced by more than 15 nucleotides. Binds poly(A). In cooperation with HNRNPA1 modulates alternative splicing of BCL2L1 by promoting splicing toward isoform Bcl-X(S), and of SMN1. Can regulate CD44 alternative splicing in a Ras pathway-dependent manner. Can regulate alternative splicing of NRXN1 and NRXN3 in the laminin G-like domain 6 containing the evolutionary conserved neurexin alternative spliced segment 4 (AS4) involved in neurexin selective targeting to postsynaptic partners. In a neuronal activity-dependent manner cooperates synergistically with KHDRBS2/SLIM-1 in regulation of NRXN1 exon skipping at AS4. The cooperation with KHDRBS2/SLIM-1 is antagonistic for regulation of NXRN3 alternative splicing at AS4. In Mus musculus (Mouse), this protein is KH domain-containing, RNA-binding, signal transduction-associated protein 1.